The following is a 339-amino-acid chain: MSVEALLLLSFGGPEGPEQVMPFLENVTRGRGIPRERLESVAEHYLHFGGVSPINGINRDLIVAIEAELARRGMQMPVYFGNRNWEPYVEDTVAAMRDNGIRRAAVFSTSAWGGYSGCAQYQEDIARGRAAAGPEAPELVKLRQYFDHPLLIEMFADAIRDAAATLPEDLRAQARLVFTAHSIPVRAANRCGPDLYERQVAHTSALVAAAAGYPEYDQVWQSRSGPPQVPWLEPDVGDHLEVLAARGVNAVIVCPVGFVADHIEVVWDLDNELAEQAAEAGIALARASTPNAQPRFAKLVVDLIDELRLGLPPQRVGGGLVPGYGSSVNGALCTPDCSG.

Fe-coproporphyrin III contacts are provided by Ser52 and Tyr121. Positions 181 and 264 each coordinate Fe(2+).

This sequence belongs to the ferrochelatase family.

The protein resides in the cytoplasm. It carries out the reaction Fe-coproporphyrin III + 2 H(+) = coproporphyrin III + Fe(2+). Its pathway is porphyrin-containing compound metabolism; protoheme biosynthesis. Functionally, involved in coproporphyrin-dependent heme b biosynthesis. Catalyzes the insertion of ferrous iron into coproporphyrin III to form Fe-coproporphyrin III. The protein is Coproporphyrin III ferrochelatase of Mycolicibacterium vanbaalenii (strain DSM 7251 / JCM 13017 / BCRC 16820 / KCTC 9966 / NRRL B-24157 / PYR-1) (Mycobacterium vanbaalenii).